The sequence spans 30 residues: Cytochrome c oxidase subunit 5C (30 aa).

Residues 15–30 (VVKELVIXXXLGLXAG) form a helical membrane-spanning segment.

Belongs to the cytochrome c oxidase subunit 5C family.

Its subcellular location is the mitochondrion inner membrane. Functionally, this protein is one of the nuclear-coded polypeptide chains of cytochrome c oxidase, the terminal oxidase in mitochondrial electron transport. In Solanum tuberosum (Potato), this protein is Cytochrome c oxidase subunit 5C (COX5C).